Reading from the N-terminus, the 392-residue chain is Putative purine permease 19 (392 aa).

A compositionally biased stretch (basic and acidic residues) spans 1–16 (MGFHTKSPDRVTHEEE). The disordered stretch occupies residues 1–29 (MGFHTKSPDRVTHEEEANIGVDNQPRETT). Ser30 carries the post-translational modification Phosphoserine. A run of 10 helical transmembrane segments spans residues 46–66 (ICIF…TLLL), 88–108 (WLQS…LLLW), 128–148 (LFLL…LYAI), 154–174 (VFFL…TTII), 182–202 (WIIL…TSSG), 220–240 (WCAF…QLGF), 254–274 (VILM…VGLF), 300–320 (LIGL…LVCL), 325–345 (FSNV…VLAF), and 354–374 (FFKE…VYSL).

Belongs to the purine permeases (TC 2.A.7.14) family.

It localises to the membrane. The protein is Putative purine permease 19 (PUP19) of Arabidopsis thaliana (Mouse-ear cress).